Reading from the N-terminus, the 445-residue chain is Chromosome partition protein MukF (445 aa).

The segment at 213 to 241 is leucine-zipper; the sequence is LSETSNTLKELQDTLQAAGDELQTQILDI.

It belongs to the MukF family. As to quaternary structure, interacts, and probably forms a ternary complex, with MukE and MukB via its C-terminal region. The complex formation is stimulated by calcium or magnesium. It is required for an interaction between MukE and MukB.

It is found in the cytoplasm. It localises to the nucleoid. Involved in chromosome condensation, segregation and cell cycle progression. May participate in facilitating chromosome segregation by condensation DNA from both sides of a centrally located replisome during cell division. Not required for mini-F plasmid partitioning. Probably acts via its interaction with MukB and MukE. Overexpression results in anucleate cells. It has a calcium binding activity. The sequence is that of Chromosome partition protein MukF from Vibrio vulnificus (strain CMCP6).